The following is a 461-amino-acid chain: Photosystem II CP43 reaction center protein (461 aa).

The Cytoplasmic segment spans residues M1–I48. A helical membrane pass occupies residues V49–E71. Topologically, residues Q72–A111 are lumenal. The helical transmembrane segment at V112–S133 threads the bilayer. The Cytoplasmic segment spans residues F134–V155. The chain crosses the membrane as a helical span at residues L156–A178. Residues P179–C232 are Lumenal-facing. Residues I233–I253 form a helical membrane-spanning segment. Residues W254–S268 are Cytoplasmic-facing. The chain crosses the membrane as a helical span at residues M269 to F289. Topologically, residues Y290–F424 are lumenal. Position 355 (E355) interacts with [CaMn4O5] cluster. The chain crosses the membrane as a helical span at residues F425–R449. Over E450–D461 the chain is Cytoplasmic.

In terms of assembly, PSII is composed of 1 copy each of membrane proteins PsbA, PsbB, PsbC, PsbD, PsbE, PsbF, PsbH, PsbI, PsbJ, PsbK, PsbL, PsbM, PsbT, PsbX, PsbY, PsbZ, Psb30/Ycf12, peripheral proteins PsbO, CyanoQ (PsbQ), PsbU, PsbV and a large number of cofactors. It forms dimeric complexes. Part of a photosystem II (PSII) assembly intermediate complex PSII-I; crystallized from a strain deleted of psbJ, it forms monomeric PSII before addition of the oxygen evolving complex. PSII-I includes 3 assembly factors not found in mature PSII (Psb27, Psb28 and Psb34), and CP43 (this protein) is not in its mature conformation. Binds multiple chlorophylls and provides some of the ligands for the Ca-4Mn-5O cluster of the oxygen-evolving complex. It may also provide a ligand for a Cl- that is required for oxygen evolution. PSII binds additional chlorophylls, carotenoids and specific lipids. serves as cofactor.

Its subcellular location is the cellular thylakoid membrane. In terms of biological role, one of the components of the core complex of photosystem II (PSII). It binds chlorophyll and helps catalyze the primary light-induced photochemical processes of PSII. PSII is a light-driven water:plastoquinone oxidoreductase, using light energy to abstract electrons from H(2)O, generating O(2) and a proton gradient subsequently used for ATP formation. This is Photosystem II CP43 reaction center protein from Thermosynechococcus vestitus (strain NIES-2133 / IAM M-273 / BP-1).